A 946-amino-acid polypeptide reads, in one-letter code: Bifunctional glutamine synthetase adenylyltransferase/adenylyl-removing enzyme (946 aa).

The adenylyl removase stretch occupies residues 1-440; sequence MKPLSSPLQQ…VFNELIGDDE (440 aa). Positions 449–946 are adenylyl transferase; the sequence is SEQWRELWQD…ASWQKWLVEE (498 aa).

The protein belongs to the GlnE family. Mg(2+) serves as cofactor.

It carries out the reaction [glutamine synthetase]-O(4)-(5'-adenylyl)-L-tyrosine + phosphate = [glutamine synthetase]-L-tyrosine + ADP. It catalyses the reaction [glutamine synthetase]-L-tyrosine + ATP = [glutamine synthetase]-O(4)-(5'-adenylyl)-L-tyrosine + diphosphate. In terms of biological role, involved in the regulation of glutamine synthetase GlnA, a key enzyme in the process to assimilate ammonia. When cellular nitrogen levels are high, the C-terminal adenylyl transferase (AT) inactivates GlnA by covalent transfer of an adenylyl group from ATP to specific tyrosine residue of GlnA, thus reducing its activity. Conversely, when nitrogen levels are low, the N-terminal adenylyl removase (AR) activates GlnA by removing the adenylyl group by phosphorolysis, increasing its activity. The regulatory region of GlnE binds the signal transduction protein PII (GlnB) which indicates the nitrogen status of the cell. The protein is Bifunctional glutamine synthetase adenylyltransferase/adenylyl-removing enzyme of Escherichia coli O81 (strain ED1a).